The chain runs to 270 residues: ATP synthase subunit a (270 aa).

Transmembrane regions (helical) follow at residues 40-60 (IDSL…FYAV), 98-118 (IAPL…MDLV), 143-163 (DVNI…YYSI), 208-228 (LFGN…MLPW), and 239-259 (AIFH…LTIV).

This sequence belongs to the ATPase A chain family. As to quaternary structure, F-type ATPases have 2 components, CF(1) - the catalytic core - and CF(0) - the membrane proton channel. CF(1) has five subunits: alpha(3), beta(3), gamma(1), delta(1), epsilon(1). CF(0) has three main subunits: a(1), b(2) and c(9-12). The alpha and beta chains form an alternating ring which encloses part of the gamma chain. CF(1) is attached to CF(0) by a central stalk formed by the gamma and epsilon chains, while a peripheral stalk is formed by the delta and b chains.

The protein resides in the cell inner membrane. Its function is as follows. Key component of the proton channel; it plays a direct role in the translocation of protons across the membrane. In Vibrio vulnificus (strain CMCP6), this protein is ATP synthase subunit a.